We begin with the raw amino-acid sequence, 636 residues long: 1-deoxy-D-xylulose-5-phosphate synthase (636 aa).

Thiamine diphosphate-binding positions include histidine 72 and 113–115 (GHA). Aspartate 144 is a Mg(2+) binding site. Thiamine diphosphate is bound by residues 145-146 (GA), asparagine 174, tyrosine 287, and glutamate 370. Position 174 (asparagine 174) interacts with Mg(2+).

This sequence belongs to the transketolase family. DXPS subfamily. As to quaternary structure, homodimer. Mg(2+) is required as a cofactor. Thiamine diphosphate serves as cofactor.

It catalyses the reaction D-glyceraldehyde 3-phosphate + pyruvate + H(+) = 1-deoxy-D-xylulose 5-phosphate + CO2. Its pathway is metabolic intermediate biosynthesis; 1-deoxy-D-xylulose 5-phosphate biosynthesis; 1-deoxy-D-xylulose 5-phosphate from D-glyceraldehyde 3-phosphate and pyruvate: step 1/1. In terms of biological role, catalyzes the acyloin condensation reaction between C atoms 2 and 3 of pyruvate and glyceraldehyde 3-phosphate to yield 1-deoxy-D-xylulose-5-phosphate (DXP). This is 1-deoxy-D-xylulose-5-phosphate synthase from Microcystis aeruginosa (strain NIES-843 / IAM M-2473).